The primary structure comprises 362 residues: MKGLILVGGYGTRLRPLTLTLPKPLVEFGNRPMILHQIEALAKAGVTDIVLAVNYRPEVMVSTLKKYEAEYGVTITFSVEEEPLGTAGPLKLAEKVLKKDDTPIFVLNSDVICDYPFQELADFHKTSGGKATIVATKVDEPSKYGVIVHDRDTPNLIDRFVEKPVEFVGNRINAGLYILNPSVIDLIEMKPTSIEKETFPILVENKELYSFDLEGYWMDVGQPKDFLSGTVLYLTALSKKEPKKLCNEKFIHGGNVLVDPSAKIHPSALIGPNVVIGPNVVVGEGARIQRSVLLSNSEVKDHAWVKSTIVGWNSRIGKWARTDGITVLGDDVEIKNEVYVNGAKVLPHKSISSNVEHEAIIM.

Belongs to the transferase hexapeptide repeat family.

The protein localises to the cytoplasm. The enzyme catalyses alpha-D-mannose 1-phosphate + GTP + H(+) = GDP-alpha-D-mannose + diphosphate. It functions in the pathway nucleotide-sugar biosynthesis; GDP-alpha-D-mannose biosynthesis; GDP-alpha-D-mannose from alpha-D-mannose 1-phosphate (GTP route): step 1/1. Its function is as follows. Involved in cell wall synthesis where it is required for glycosylation. Involved in cell cycle progression through cell-size checkpoint. In Debaryomyces hansenii (strain ATCC 36239 / CBS 767 / BCRC 21394 / JCM 1990 / NBRC 0083 / IGC 2968) (Yeast), this protein is Mannose-1-phosphate guanyltransferase (MPG1).